The primary structure comprises 365 residues: Glycerol dehydrogenase (365 aa).

NAD(+)-binding residues include D37, G94, K95, T116, and S119. D121 contacts glycerol. NAD(+) is bound by residues S125, L127, and Y131. The Mn(2+) site is built by D171, H254, and H271. H254 contributes to the glycerol binding site.

Belongs to the iron-containing alcohol dehydrogenase family. As to quaternary structure, homohexamer. It depends on Mn(2+) as a cofactor.

It carries out the reaction glycerol + NAD(+) = dihydroxyacetone + NADH + H(+). The catalysed reaction is hydroxyacetone + NADH + H(+) = (S)-propane-1,2-diol + NAD(+). The protein operates within polyol metabolism; glycerol fermentation; glycerone phosphate from glycerol (oxidative route): step 1/2. Its activity is regulated as follows. Inhibited by zinc. Its function is as follows. Catalyzes the NAD-dependent oxidation of glycerol to dihydroxyacetone (glycerone). Allows microorganisms to utilize glycerol as a source of carbon under anaerobic conditions. Exhibits a rather broad substrate specificity since it can also oxidize 1,2-propanediol and 2,3-butanediol and reduce dihydroxyacetone. Cannot use NADP(+) as an electron acceptor for the oxidation of glycerol. This chain is Glycerol dehydrogenase, found in Citrobacter freundii.